The following is a 995-amino-acid chain: Bifunctional glutamine synthetase adenylyltransferase/adenylyl-removing enzyme (995 aa).

The tract at residues 1–474 (MNHSAPGNAD…HYEKLFEGDD (474 aa)) is adenylyl removase. GlnE regions lie at residues 122–333 (RRMK…MKRQ) and 637–853 (SYEE…MRRA). The interval 479–995 (AKLPALDYSA…LEGTSPASAR (517 aa)) is adenylyl transferase.

Belongs to the GlnE family. Mg(2+) serves as cofactor.

The enzyme catalyses [glutamine synthetase]-O(4)-(5'-adenylyl)-L-tyrosine + phosphate = [glutamine synthetase]-L-tyrosine + ADP. It carries out the reaction [glutamine synthetase]-L-tyrosine + ATP = [glutamine synthetase]-O(4)-(5'-adenylyl)-L-tyrosine + diphosphate. Functionally, involved in the regulation of glutamine synthetase GlnA, a key enzyme in the process to assimilate ammonia. When cellular nitrogen levels are high, the C-terminal adenylyl transferase (AT) inactivates GlnA by covalent transfer of an adenylyl group from ATP to specific tyrosine residue of GlnA, thus reducing its activity. Conversely, when nitrogen levels are low, the N-terminal adenylyl removase (AR) activates GlnA by removing the adenylyl group by phosphorolysis, increasing its activity. The regulatory region of GlnE binds the signal transduction protein PII (GlnB) which indicates the nitrogen status of the cell. In Bradyrhizobium diazoefficiens (strain JCM 10833 / BCRC 13528 / IAM 13628 / NBRC 14792 / USDA 110), this protein is Bifunctional glutamine synthetase adenylyltransferase/adenylyl-removing enzyme.